The following is a 461-amino-acid chain: D-phenylhydantoinase (461 aa).

3 residues coordinate a divalent metal cation: His-59, His-61, and Lys-151. Lys-151 bears the N6-carboxylysine mark. Tyr-156 contributes to the substrate binding site. A divalent metal cation is bound by residues His-182 and His-239. Ser-286 is a substrate binding site. Asp-313 serves as a coordination point for a divalent metal cation. Residue Asn-335 participates in substrate binding.

This sequence belongs to the metallo-dependent hydrolases superfamily. Hydantoinase/dihydropyrimidinase family. Homotetramer. Requires a divalent metal cation as cofactor. Carboxylation allows a single lysine to coordinate two divalent metal cations.

It carries out the reaction D-5-phenylhydantoin + H2O = N-carbamoyl-D-phenylglycine + H(+). Catalyzes the stereospecific hydrolysis of the cyclic amide bond of D-hydantoin derivatives with an aromatic side chains at the 5'-position. Has no activity on dihydropyrimidines. The physiological function is unknown. This chain is D-phenylhydantoinase, found in Escherichia coli O9:H4 (strain HS).